Consider the following 156-residue polypeptide: RNA polymerase sigma factor SigS (156 aa).

A Polymerase core binding motif is present at residues 29–44; that stretch reads EYYQLLLIKMWQLSQI. The H-T-H motif DNA-binding region spans 126–145; sequence QFEIAEIMSLSLSTIKLIKM.

This sequence belongs to the sigma-70 factor family.

Its function is as follows. Sigma factors are initiation factors that promote the attachment of RNA polymerase to specific initiation sites and are then released. Sigma-S contributes to the protection against external stress, thus playing a role in cellular fitness and survival. This Staphylococcus aureus (strain NCTC 8325 / PS 47) protein is RNA polymerase sigma factor SigS (sigS).